Here is a 52-residue protein sequence, read N- to C-terminus: Teratocyte protein CftICK-I (52 aa).

A signal peptide spans 1-19 (MYKLCILFLVVIFAVMAIA). Disulfide bonds link cysteine 22–cysteine 37, cysteine 29–cysteine 41, and cysteine 36–cysteine 51.

In terms of tissue distribution, abundantly expressed by teratocytes, which are extra-embryonic cells released by parasitoid wasps into their hosts during larval eclosion.

It is found in the secreted. Functionally, this endoparasitoid wasp peptide has immununosuppressive, antimicrobial and insecticidal activities. Suppress cellular immunity which is detectable as a reduction of hemocyte encapsulation in the host. Shows potent antifungal activity against C.albicans (MIC~0.25 ug/ml). In vivo, ingestion of this peptide (probably at excessive doses) increases larval mortality and reduces leaf consumption of D.saccharalis, a permissive host for C.flavipes. This chain is Teratocyte protein CftICK-I, found in Cotesia flavipes (Parasitic wasp).